The sequence spans 481 residues: Phosphoglycerate kinase 1, chloroplastic (481 aa).

The transit peptide at 1–75 (MASAAASSAF…VRGKGSRGVV (75 aa)) directs the protein to the chloroplast. Ser81 is modified (phosphoserine). (2R)-3-phosphoglycerate contacts are provided by Ala99, Asp100, Asn102, Arg116, Thr138, His139, Gly141, Arg142, Arg197, His229, and Arg230. ADP is bound at residue Gly275. Gly275 is a CDP binding site. Positions 277 and 281 each coordinate AMP. Residue Lys281 coordinates ATP. Gly299 is an ADP binding site. Gly299 lines the CDP pocket. The AMP site is built by Gly300 and Gly372. 2 residues coordinate ATP: Gly300 and Gly372. CDP contacts are provided by Gly397 and Phe402. Phe402 provides a ligand contact to ADP. Glu403 is a binding site for AMP. ATP contacts are provided by Glu403, Asp434, and Ser435. Position 434 (Asp434) interacts with Mg(2+).

It belongs to the phosphoglycerate kinase family. As to quaternary structure, monomer. Binds to FTSZ2-1 and FTSZ2-2. Mg(2+) serves as cofactor.

Its subcellular location is the plastid. It localises to the chloroplast. It carries out the reaction (2R)-3-phosphoglycerate + ATP = (2R)-3-phospho-glyceroyl phosphate + ADP. It functions in the pathway carbohydrate biosynthesis; Calvin cycle. Its function is as follows. May trigger the phosphorylation of FTSZ2-1 and FTSZ2-2. This is Phosphoglycerate kinase 1, chloroplastic from Arabidopsis thaliana (Mouse-ear cress).